We begin with the raw amino-acid sequence, 601 residues long: Elongation factor 4 (601 aa).

The tr-type G domain maps to 6 to 188 (DHIRNFSIVA…AIVHQLPPPR (183 aa)). Residues 18-23 (DHGKST) and 135-138 (NKVD) contribute to the GTP site.

The protein belongs to the TRAFAC class translation factor GTPase superfamily. Classic translation factor GTPase family. LepA subfamily.

Its subcellular location is the cell inner membrane. It carries out the reaction GTP + H2O = GDP + phosphate + H(+). In terms of biological role, required for accurate and efficient protein synthesis under certain stress conditions. May act as a fidelity factor of the translation reaction, by catalyzing a one-codon backward translocation of tRNAs on improperly translocated ribosomes. Back-translocation proceeds from a post-translocation (POST) complex to a pre-translocation (PRE) complex, thus giving elongation factor G a second chance to translocate the tRNAs correctly. Binds to ribosomes in a GTP-dependent manner. The polypeptide is Elongation factor 4 (Mesorhizobium japonicum (strain LMG 29417 / CECT 9101 / MAFF 303099) (Mesorhizobium loti (strain MAFF 303099))).